A 165-amino-acid chain; its full sequence is LIM domain transcription factor LMO4.2 (165 aa).

LIM zinc-binding domains follow at residues 21–83 (KRCA…LFGN) and 85–147 (GACS…ALIN).

In terms of biological role, acts as a positive cofactor of GATA transcription factors to establish the identity of the ventral mesoderm during gastrulation. Down-regulation in the dorsal mesoderm is necessary for the proper formation of this territory since, when present, lmo4 may bind ldb1 and restrict the availability of this cofactor for Spemman organizer transcription factors. At neurula stages, suppresses primary neuron differentiation and modulates gene expression at the Isthmic Organizer of the midbrain-hindbrain boundary. This Xenopus tropicalis (Western clawed frog) protein is LIM domain transcription factor LMO4.2 (lmo4.2).